The primary structure comprises 156 residues: Small ribosomal subunit protein uS7 (156 aa).

It belongs to the universal ribosomal protein uS7 family. In terms of assembly, part of the 30S ribosomal subunit. Contacts proteins S9 and S11.

One of the primary rRNA binding proteins, it binds directly to 16S rRNA where it nucleates assembly of the head domain of the 30S subunit. Is located at the subunit interface close to the decoding center, probably blocks exit of the E-site tRNA. This is Small ribosomal subunit protein uS7 from Actinobacillus succinogenes (strain ATCC 55618 / DSM 22257 / CCUG 43843 / 130Z).